Consider the following 364-residue polypeptide: DNA polymerase IV (364 aa).

Positions 7-187 (IIHVDMDAFY…LPVNRVPGVG (181 aa)) constitute a UmuC domain. Mg(2+) contacts are provided by Asp11 and Asp105. Residue Glu106 is part of the active site.

Belongs to the DNA polymerase type-Y family. As to quaternary structure, monomer. It depends on Mg(2+) as a cofactor.

It localises to the cytoplasm. It carries out the reaction DNA(n) + a 2'-deoxyribonucleoside 5'-triphosphate = DNA(n+1) + diphosphate. Its function is as follows. Poorly processive, error-prone DNA polymerase involved in untargeted mutagenesis. Copies undamaged DNA at stalled replication forks, which arise in vivo from mismatched or misaligned primer ends. These misaligned primers can be extended by PolIV. Exhibits no 3'-5' exonuclease (proofreading) activity. May be involved in translesional synthesis, in conjunction with the beta clamp from PolIII. The polypeptide is DNA polymerase IV (Stenotrophomonas maltophilia (strain K279a)).